Reading from the N-terminus, the 251-residue chain is Lactose phosphotransferase system repressor (251 aa).

Residues 3 to 58 form the HTH deoR-type domain; it reads KHERLDEIAKLVNKKGTIRTNEIVEGLNVSDMTVRRDLIELENKGILTKIHGGARS. The H-T-H motif DNA-binding region spans 20–39; that stretch reads IRTNEIVEGLNVSDMTVRRD.

In terms of biological role, repressor of the lactose catabolism operon. Galactose-6-phosphate is the inducer. This chain is Lactose phosphotransferase system repressor (lacR), found in Staphylococcus aureus (strain N315).